Reading from the N-terminus, the 378-residue chain is Tyrosinase-like protein phomQ1' (378 aa).

The chain crosses the membrane as a helical span at residues threonine 42–serine 62. Cu cation-binding residues include histidine 130 and histidine 139. A glycan (N-linked (GlcNAc...) asparagine) is linked at asparagine 209. 2 residues coordinate Cu cation: histidine 279 and histidine 305.

The protein belongs to the tyrosinase family. Requires Cu(2+) as cofactor.

It localises to the membrane. Its pathway is mycotoxin biosynthesis. Tyrosinase-like protein; part of the gene cluster that mediates the biosynthesis of the phomopsins, a group of hexapeptide mycotoxins which infects lupins and causes lupinosis disease in livestock. The pathway starts with the processing of the precursor phomA' by several endopeptidases including kexin proteases as well as the cluster-specific S41 family peptidase phomP1 and the oligopeptidase phomG' to produce 10 identical copies of the hexapeptide Tyr-Val-Ile-Pro-Ile-Asp. After being excised from the precursor peptide, the core peptides are cyclized and modified post-translationally by enzymes encoded within the gene cluster. The timing and order of proteolysis of the phomA' precursor and PTMs are still unknown. Two tyrosinase-like enzymes, phomQ1' and phomQ2, catalyze the chlorination and hydroxylation of Tyr, respectively. PhomYb, is proposed to be involved in the construction of the macrocyclic structure. The other 4 ustYa family proteins may be involved in PTMs that generate the unique structure of phomopsin A. PhomYa' is required for the hydroxylation of C-beta of Tyr. PhomYc', phomYd', and phomYe are responsible for the biosynthesis of 2,3-dehydroisoleucine (dIle), 2,3-dehydroaspartic acid (dAsp), and 3,4-dehydroproline (dPro), respectively. While dIle formation by phomYc' is indispensable for the installation of dAsp by phomYd', the order of the other PTMs have not been elucidated yet. Most of the biosynthetic enzymes likely have broad substrate specificity, and thus, there might be a metabolic grid from a precursor to phomopsin A. The enzyme(s) responsible for the biosynthesis of 3,4-dehydrovaline (dVal) have also not been identified yet. Finally, phomM' acts as an S-adenosylmethionine-dependent alpha-N-methyltransferase that catalyzes two successive N-methylation reactions, converting N-desmethyl-phomopsin A to phomopsin A and phomopsin A further to an N,N-dimethylated congener called phomopsin E. The sequence is that of Tyrosinase-like protein phomQ1' from Diaporthe leptostromiformis (Lupinosis disease fungus).